Here is a 284-residue protein sequence, read N- to C-terminus: D-tagatose-1,6-bisphosphate aldolase subunit GatY (284 aa).

Aspartate 82 serves as the catalytic Proton donor. 2 residues coordinate Zn(2+): histidine 83 and histidine 180. Glycine 181 lines the dihydroxyacetone phosphate pocket. Histidine 208 lines the Zn(2+) pocket. Residues 209–211 (GAS) and 230–233 (NVAT) each bind dihydroxyacetone phosphate.

This sequence belongs to the class II fructose-bisphosphate aldolase family. TagBP aldolase GatY subfamily. In terms of assembly, forms a complex with GatZ. The cofactor is Zn(2+).

It carries out the reaction D-tagatofuranose 1,6-bisphosphate = D-glyceraldehyde 3-phosphate + dihydroxyacetone phosphate. Its pathway is carbohydrate metabolism; D-tagatose 6-phosphate degradation; D-glyceraldehyde 3-phosphate and glycerone phosphate from D-tagatose 6-phosphate: step 2/2. Catalytic subunit of the tagatose-1,6-bisphosphate aldolase GatYZ, which catalyzes the reversible aldol condensation of dihydroxyacetone phosphate (DHAP or glycerone-phosphate) with glyceraldehyde 3-phosphate (G3P) to produce tagatose 1,6-bisphosphate (TBP). Requires GatZ subunit for full activity and stability. Is involved in the catabolism of galactitol. In Escherichia coli O17:K52:H18 (strain UMN026 / ExPEC), this protein is D-tagatose-1,6-bisphosphate aldolase subunit GatY.